The following is a 329-amino-acid chain: Glycerol-3-phosphate dehydrogenase [NAD(P)+] (329 aa).

NADPH contacts are provided by Ser13, Trp14, His34, and Lys105. Sn-glycerol 3-phosphate contacts are provided by Lys105, Gly134, and Ser136. NADPH is bound at residue Ala138. Residues Lys189, Asp242, Ser252, Arg253, and Asn254 each coordinate sn-glycerol 3-phosphate. Lys189 functions as the Proton acceptor in the catalytic mechanism. Arg253 contributes to the NADPH binding site. NADPH is bound by residues Val277 and Glu279.

Belongs to the NAD-dependent glycerol-3-phosphate dehydrogenase family.

It localises to the cytoplasm. The enzyme catalyses sn-glycerol 3-phosphate + NAD(+) = dihydroxyacetone phosphate + NADH + H(+). It carries out the reaction sn-glycerol 3-phosphate + NADP(+) = dihydroxyacetone phosphate + NADPH + H(+). Its pathway is membrane lipid metabolism; glycerophospholipid metabolism. Catalyzes the reduction of the glycolytic intermediate dihydroxyacetone phosphate (DHAP) to sn-glycerol 3-phosphate (G3P), the key precursor for phospholipid synthesis. The polypeptide is Glycerol-3-phosphate dehydrogenase [NAD(P)+] (Legionella pneumophila (strain Paris)).